A 362-amino-acid chain; its full sequence is Protein-arginine kinase (362 aa).

Positions 24-255 (IVLSSRIRLA…QQLIAQERMA (232 aa)) constitute a Phosphagen kinase C-terminal domain. ATP contacts are provided by residues 27 to 31 (SSRIR), histidine 92, arginine 126, 177 to 181 (RASVM), and 208 to 213 (RGTYGE). The RDXXRA motif of the pArg binding pocket involved in allosteric regulation signature appears at 338–343 (RDVRRA).

The protein belongs to the ATP:guanido phosphotransferase family.

It catalyses the reaction L-arginyl-[protein] + ATP = N(omega)-phospho-L-arginyl-[protein] + ADP + H(+). Its activity is regulated as follows. Appears to be allosterically activated by the binding of pArg-containing polypeptides to the pArg-binding pocket localized in the C-terminal domain of McsB. Catalyzes the specific phosphorylation of arginine residues in a large number of proteins. Is part of the bacterial stress response system. Protein arginine phosphorylation has a physiologically important role and is involved in the regulation of many critical cellular processes, such as protein homeostasis, motility, competence, and stringent and stress responses, by regulating gene expression and protein activity. The protein is Protein-arginine kinase of Geobacillus sp. (strain WCH70).